The following is a 196-amino-acid chain: Vascular-related unknown protein 2 (196 aa).

The segment at Ala84 to Lys130 is disordered. Positions Glu103–Thr121 are enriched in acidic residues.

In terms of biological role, involved in the regulation of plant growth. The polypeptide is Vascular-related unknown protein 2 (Arabidopsis thaliana (Mouse-ear cress)).